The sequence spans 375 residues: MTQTGKRQRRKFGRIRQFNSGRWQASYTGPDGRVYIAPKTFNAKIDAEAWLTDRRREIDRQLWSPASGQEDRPGAPFGEYAEGWLKQRGIKDRTRAHYRKLLDNHILATFADTDLRDITPAAVRRWYATTAVGTPTMRAHSYSLLRAIMQTALADDLIDSNPCRISGASTARRVHKIRPATLDELETITKAMPDPYQAFVLMAAWLAMRYGELTELRRKDIDLHGEVARVRRAVVRVGEGFKVTTPKSDAGVRDISIPPHLIPAIEDHLHKHVNPGRESLLFPSVNDPNRHLAPSALYRMFYKARKAAGRPDLRVHDLRHSGAVLAASTGATLAELMQRLGHSTAGAALRYQHAAKGRDREIAALLSKLAENQEM.

A Core-binding (CB) domain is found at 75-153 (APFGEYAEGW…LLRAIMQTAL (79 aa)). Residues 175–364 (HKIRPATLDE…AKGRDREIAA (190 aa)) form the Tyr recombinase domain. Active-site residues include arginine 209, histidine 316, arginine 319, and histidine 342. Catalysis depends on tyrosine 351, which acts as the O-(3'-phospho-DNA)-tyrosine intermediate.

Belongs to the 'phage' integrase family.

Its function is as follows. Integrase is necessary for integration of the phage into the host genome by site-specific recombination. In conjunction with excisionase, integrase is also necessary for excision of the prophage from the host genome. In Mycobacterium tuberculosis (strain CDC 1551 / Oshkosh), this protein is Putative prophage phiRv2 integrase.